The chain runs to 176 residues: Interleukin-19 (176 aa).

The first 24 residues, 1-24, serve as a signal peptide directing secretion; the sequence is MKTQCASTWLLGMTLILCSVHIYS. 3 cysteine pairs are disulfide-bonded: Cys-28/Cys-120, Cys-74/Cys-126, and Cys-75/Cys-128. Asn-56 is a glycosylation site (N-linked (GlcNAc...) asparagine). Asn-127 and Asn-134 each carry an N-linked (GlcNAc...) asparagine glycan.

The protein belongs to the IL-10 family.

It is found in the secreted. In terms of biological role, cytokine that functions as an anti-inflammatory and proangiogenic factor. Polarizes adaptive immunity to an anti-inflammatory phenotype through induction of T-helper 2 responses by both down-regulation of IFN-gamma and up-regulation of IL4 and IL5. Produced by osteocytes, stimulates granulopoiesis and neutrophil formation. Exerts its biological effect through a receptor complex consisting of a heterodimer of IL20RA and IL20RB. In turn, activates the Janus kinase (JAK) and signal transducer and activator of transcription (STAT) pathway, and importantly, STAT3. The chain is Interleukin-19 (Il19) from Mus musculus (Mouse).